The chain runs to 621 residues: Complex I assembly factor ACAD9, mitochondrial (621 aa).

A mitochondrion-targeting transit peptide spans 1-37 (MSGCGLFLRTTAAARACRGLVVSTANRRLLRTSPPVR). Lys41 is modified (N6-acetyllysine). The residue at position 92 (Lys92) is an N6-succinyllysine. Residue Glu426 is the Proton acceptor of the active site. Thr478 is subject to Phosphothreonine. N6-acetyllysine; alternate is present on Lys521. Lys521 is modified (N6-succinyllysine; alternate).

It belongs to the acyl-CoA dehydrogenase family. Homodimer. Interacts with NDUFAF1 and ECSIT. Part of the mitochondrial complex I assembly/MCIA complex that comprises at least the core subunits TMEM126B, NDUFAF1, ECSIT and ACAD9 and complement subunits such as COA1 and TMEM186. Interacts with TMEM70 and TMEM242. Requires FAD as cofactor. In terms of tissue distribution, ubiquitously expressed in most normal human tissues and cancer cell lines with high level of expression in heart, skeletal muscles, brain, kidney and liver. In the cerebellum uniquely expressed in the granular layer (at protein level).

The protein localises to the mitochondrion inner membrane. The enzyme catalyses eicosanoyl-CoA + oxidized [electron-transfer flavoprotein] + H(+) = (2E)-eicosenoyl-CoA + reduced [electron-transfer flavoprotein]. It carries out the reaction octadecanoyl-CoA + oxidized [electron-transfer flavoprotein] + H(+) = (2E)-octadecenoyl-CoA + reduced [electron-transfer flavoprotein]. The catalysed reaction is oxidized [electron-transfer flavoprotein] + hexadecanoyl-CoA + H(+) = (2E)-hexadecenoyl-CoA + reduced [electron-transfer flavoprotein]. It catalyses the reaction decanoyl-CoA + oxidized [electron-transfer flavoprotein] + H(+) = (2E)-decenoyl-CoA + reduced [electron-transfer flavoprotein]. The enzyme catalyses nonanoyl-CoA + oxidized [electron-transfer flavoprotein] + H(+) = (2E)-nonenoyl-CoA + reduced [electron-transfer flavoprotein]. It carries out the reaction pentadecanoyl-CoA + oxidized [electron-transfer flavoprotein] + H(+) = (2E)-pentadecenoyl-CoA + reduced [electron-transfer flavoprotein]. The catalysed reaction is undecanoyl-CoA + oxidized [electron-transfer flavoprotein] + H(+) = trans-2-undecenoyl-CoA + reduced [electron-transfer flavoprotein]. It catalyses the reaction (9Z)-hexadecenoyl-CoA + oxidized [electron-transfer flavoprotein] + H(+) = (2E,9Z)-hexadecadienoyl-CoA + reduced [electron-transfer flavoprotein]. The enzyme catalyses heptadecanoyl-CoA + oxidized [electron-transfer flavoprotein] + H(+) = trans-2-heptadecenoyl-CoA + reduced [electron-transfer flavoprotein]. It carries out the reaction (9E)-octadecenoyl-CoA + oxidized [electron-transfer flavoprotein] + H(+) = (2E,9E)-octadecadienoyl-CoA + reduced [electron-transfer flavoprotein]. The catalysed reaction is oxidized [electron-transfer flavoprotein] + (9Z)-octadecenoyl-CoA + H(+) = (2E,9Z)-octadecadienoyl-CoA + reduced [electron-transfer flavoprotein]. It catalyses the reaction (9Z,12Z)-octadecadienoyl-CoA + oxidized [electron-transfer flavoprotein] + H(+) = (2E,9Z,12Z)-octadecatrienoyl-CoA + reduced [electron-transfer flavoprotein]. The enzyme catalyses (4Z,7Z,10Z,13Z,16Z,19Z)-docosahexaenoyl-CoA + oxidized [electron-transfer flavoprotein] + H(+) = (2E,4Z,7Z,10Z,13Z,16Z,19Z)-docosaheptaenoyl-CoA + reduced [electron-transfer flavoprotein]. It carries out the reaction tetradecanoyl-CoA + oxidized [electron-transfer flavoprotein] + H(+) = (2E)-tetradecenoyl-CoA + reduced [electron-transfer flavoprotein]. As part of the MCIA complex, primarily participates in the assembly of the mitochondrial complex I and therefore plays a role in oxidative phosphorylation. This moonlighting protein also has a dehydrogenase activity toward a broad range of substrates with greater specificity for long-chain unsaturated acyl-CoAs. However, in vivo, it does not seem to play a primary role in fatty acid oxidation. In addition, the function in complex I assembly is independent of the dehydrogenase activity of the protein. This is Complex I assembly factor ACAD9, mitochondrial from Homo sapiens (Human).